Here is a 187-residue protein sequence, read N- to C-terminus: Urease accessory protein UreE (187 aa).

The tract at residues 154-187 (RANSAQGHGHSHGHSHSHDHHGYHHHGDGNWHKH) is disordered. The span at 162–177 (GHSHGHSHSHDHHGYH) shows a compositional bias: basic residues. The span at 178 to 187 (HHGDGNWHKH) shows a compositional bias: basic and acidic residues.

The protein belongs to the UreE family.

Its subcellular location is the cytoplasm. Its function is as follows. Involved in urease metallocenter assembly. Binds nickel. Probably functions as a nickel donor during metallocenter assembly. This chain is Urease accessory protein UreE, found in Actinobacillus pleuropneumoniae (Haemophilus pleuropneumoniae).